Here is a 314-residue protein sequence, read N- to C-terminus: DNA-directed RNA polymerase subunit alpha (314 aa).

The segment at methionine 1–threonine 228 is alpha N-terminal domain (alpha-NTD). The segment at lysine 245–aspartate 314 is alpha C-terminal domain (alpha-CTD).

Belongs to the RNA polymerase alpha chain family. Homodimer. The RNAP catalytic core consists of 2 alpha, 1 beta, 1 beta' and 1 omega subunit. When a sigma factor is associated with the core the holoenzyme is formed, which can initiate transcription.

The enzyme catalyses RNA(n) + a ribonucleoside 5'-triphosphate = RNA(n+1) + diphosphate. DNA-dependent RNA polymerase catalyzes the transcription of DNA into RNA using the four ribonucleoside triphosphates as substrates. This Limosilactobacillus reuteri (strain DSM 20016) (Lactobacillus reuteri) protein is DNA-directed RNA polymerase subunit alpha.